A 133-amino-acid polypeptide reads, in one-letter code: Putative actin-depolymerizing factor 11 (133 aa).

Residues 1-133 form the ADF-H domain; the sequence is MVLHDDCKLT…SLDAIRRRIN (133 aa).

It belongs to the actin-binding proteins ADF family.

Its subcellular location is the cytoplasm. It is found in the cytoskeleton. Actin-depolymerizing protein. Severs actin filaments (F-actin) and binds to actin monomers. The chain is Putative actin-depolymerizing factor 11 (ADF11) from Arabidopsis thaliana (Mouse-ear cress).